The chain runs to 336 residues: UDP-3-O-acylglucosamine N-acyltransferase (336 aa).

Catalysis depends on His233, which acts as the Proton acceptor.

The protein belongs to the transferase hexapeptide repeat family. LpxD subfamily. As to quaternary structure, homotrimer.

It catalyses the reaction a UDP-3-O-[(3R)-3-hydroxyacyl]-alpha-D-glucosamine + a (3R)-hydroxyacyl-[ACP] = a UDP-2-N,3-O-bis[(3R)-3-hydroxyacyl]-alpha-D-glucosamine + holo-[ACP] + H(+). The protein operates within bacterial outer membrane biogenesis; LPS lipid A biosynthesis. Catalyzes the N-acylation of UDP-3-O-acylglucosamine using 3-hydroxyacyl-ACP as the acyl donor. Is involved in the biosynthesis of lipid A, a phosphorylated glycolipid that anchors the lipopolysaccharide to the outer membrane of the cell. In Helicobacter pylori (strain ATCC 700392 / 26695) (Campylobacter pylori), this protein is UDP-3-O-acylglucosamine N-acyltransferase.